We begin with the raw amino-acid sequence, 292 residues long: Peroxisomal 2,4-dienoyl-CoA reductase [(3E)-enoyl-CoA-producing] (292 aa).

Residues 35–40 (GGGSGI), 60–64 (RSLPR), and Asp86 each bind NADP(+). A substrate-binding site is contributed by Arg60. Residues Arg88, Phe118, and 126 to 128 (SFN) contribute to the substrate site. Residue Lys151 is modified to N6-acetyllysine. NADP(+)-binding positions include Lys182 and 208–214 (PGAISGT). Position 219 (Arg219) interacts with substrate. Phosphoserine is present on Ser287. The Microbody targeting signal motif lies at 290–292 (AKL). Lys291 is modified (N6-acetyllysine).

It belongs to the short-chain dehydrogenases/reductases (SDR) family. 2,4-dienoyl-CoA reductase subfamily. As to quaternary structure, monomer, dimer and oligomer.

The protein localises to the peroxisome. The enzyme catalyses a (2E,4Z)-dienoyl-CoA + NADPH + H(+) = a 4,5-saturated-(3E)-enoyl-CoA + NADP(+). It catalyses the reaction a (2E,4E)-dienoyl-CoA + NADPH + H(+) = a 4,5-saturated-(3E)-enoyl-CoA + NADP(+). The catalysed reaction is (2E,4E)-hexadienoyl-CoA + NADPH + H(+) = (3E)-hexenoyl-CoA + NADP(+). It carries out the reaction (2E,4E)-decadienoyl-CoA + NADPH + H(+) = (3E)-decenoyl-CoA + NADP(+). The enzyme catalyses (2E,4Z,7Z,10Z,13Z,16Z,19Z)-docosaheptaenoyl-CoA + NADPH + H(+) = (3E,7Z,10Z,13Z,16Z,19Z)-docosahexaenoyl-CoA + NADP(+). Its function is as follows. Auxiliary enzyme of beta-oxidation. Participates in the degradation of unsaturated fatty enoyl-CoA esters having double bonds in both even- and odd-numbered positions in peroxisome. Catalyzes the NADP-dependent reduction of 2,4-dienoyl-CoA to yield trans-3-enoyl-CoA. Has activity towards short and medium chain 2,4-dienoyl-CoAs, but also towards 2,4,7,10,13,16,19-docosaheptaenoyl-CoA, suggesting that it does not constitute a rate limiting step in the peroxisomal degradation of docosahexaenoic acid. The polypeptide is Peroxisomal 2,4-dienoyl-CoA reductase [(3E)-enoyl-CoA-producing] (Decr2) (Rattus norvegicus (Rat)).